A 500-amino-acid chain; its full sequence is Probable malate:quinone oxidoreductase (500 aa).

It belongs to the MQO family. Requires FAD as cofactor.

The enzyme catalyses (S)-malate + a quinone = a quinol + oxaloacetate. The protein operates within carbohydrate metabolism; tricarboxylic acid cycle; oxaloacetate from (S)-malate (quinone route): step 1/1. In Corynebacterium aurimucosum (strain ATCC 700975 / DSM 44827 / CIP 107346 / CN-1) (Corynebacterium nigricans), this protein is Probable malate:quinone oxidoreductase.